Consider the following 255-residue polypeptide: CCAAT/enhancer-binding protein delta (255 aa).

Disordered stretches follow at residues 1-42, 91-121, and 138-206; these read MTCA…AAPA, GGPA…PGSL, and PAAQ…QEMQ. Lysine 107 participates in a covalent cross-link: Glycyl lysine isopeptide (Lys-Gly) (interchain with G-Cter in SUMO). Positions 141–161 are enriched in pro residues; the sequence is QPTPPASPDPPRRSPAPPAPG. The span at 163 to 187 shows a compositional bias: basic and acidic residues; that stretch reads ARDKAAGKRGPDRGSPEYRQRRERN. Residues 177 to 240 enclose the bZIP domain; it reads SPEYRQRRER…AGLRRFFKQL (64 aa). Positions 181–208 are basic motif; sequence RQRRERNNIAVRKSRDKAKRRNQEMQQK. The leucine-zipper stretch occupies residues 212-240; sequence LSAENEKLQQRVEQLTRDLAGLRRFFKQL.

Belongs to the bZIP family. C/EBP subfamily. Binds DNA as a homodimer and as a heterodimer. Can form stable heterodimers with CEBPA, CEBPB and CEBPE. Directly interacts with SPI1/PU.1; this interaction does not affect DNA-binding properties of each partner. Interacts with PRDM16.

Its subcellular location is the nucleus. Functionally, transcription activator that recognizes two different DNA motifs: the CCAAT homology common to many promoters and the enhanced core homology common to many enhancers. Important transcription factor regulating the expression of genes involved in immune and inflammatory responses. Transcriptional activator that enhances IL6 transcription alone and as heterodimer with CEBPB. In Ovis aries (Sheep), this protein is CCAAT/enhancer-binding protein delta (CEBPD).